The sequence spans 562 residues: Catalase T (562 aa).

Residues His64 and Asn137 contribute to the active site. Tyr351 is a binding site for heme.

It belongs to the catalase family. In terms of assembly, homotetramer. Heme is required as a cofactor.

Its subcellular location is the cytoplasm. It catalyses the reaction 2 H2O2 = O2 + 2 H2O. Functionally, occurs in almost all aerobically respiring organisms and serves to protect cells from the toxic effects of hydrogen peroxide. The protein is Catalase T (CTT1) of Saccharomyces cerevisiae (strain YJM789) (Baker's yeast).